The primary structure comprises 652 residues: Starch synthase 1, chloroplastic/amyloplastic (652 aa).

Residues 1–49 (MASLQISGSVKFEPFVGFNRIRHFRPIASLGFPRFRRRFSIGRSLLLRR) constitute a chloroplast transit peptide. ADP-alpha-D-glucose is bound at residue K156.

It belongs to the glycosyltransferase 1 family. Bacterial/plant glycogen synthase subfamily. In terms of tissue distribution, expressed in roots, leaves, stems, buds and flowers.

The protein localises to the plastid. It is found in the chloroplast. It localises to the amyloplast. The enzyme catalyses [(1-&gt;4)-alpha-D-glucosyl](n) + ADP-alpha-D-glucose = [(1-&gt;4)-alpha-D-glucosyl](n+1) + ADP + H(+). The protein operates within glycan biosynthesis; starch biosynthesis. Functionally, involved in the synthesis of short glycan chains within amylopectin in leaves. Is required to generate chains up to about a degree of polymerization of 10 (DP10). This chain is Starch synthase 1, chloroplastic/amyloplastic (SS1), found in Arabidopsis thaliana (Mouse-ear cress).